The sequence spans 398 residues: Phosphopentomutase (398 aa).

Aspartate 13, aspartate 290, histidine 295, aspartate 331, histidine 332, and histidine 343 together coordinate Mn(2+).

It belongs to the phosphopentomutase family. Requires Mn(2+) as cofactor.

The protein localises to the cytoplasm. The enzyme catalyses 2-deoxy-alpha-D-ribose 1-phosphate = 2-deoxy-D-ribose 5-phosphate. It carries out the reaction alpha-D-ribose 1-phosphate = D-ribose 5-phosphate. It functions in the pathway carbohydrate degradation; 2-deoxy-D-ribose 1-phosphate degradation; D-glyceraldehyde 3-phosphate and acetaldehyde from 2-deoxy-alpha-D-ribose 1-phosphate: step 1/2. Isomerase that catalyzes the conversion of deoxy-ribose 1-phosphate (dRib-1-P) and ribose 1-phosphate (Rib-1-P) to deoxy-ribose 5-phosphate (dRib-5-P) and ribose 5-phosphate (Rib-5-P), respectively. This Clostridium tetani (strain Massachusetts / E88) protein is Phosphopentomutase.